The primary structure comprises 559 residues: Glycerol kinase (559 aa).

Thr20 lines the ADP pocket. Residues Thr20, Ser21, and Ser22 each contribute to the ATP site. Thr20 contacts sn-glycerol 3-phosphate. Position 24 (Arg24) interacts with ADP. Positions 94, 95, and 148 each coordinate sn-glycerol 3-phosphate. Residues Arg94, Glu95, and Tyr148 each contribute to the glycerol site. Gly252 is a beta-D-fructose 1,6-bisphosphate binding site. Asp265 contacts sn-glycerol 3-phosphate. The glycerol site is built by Asp265 and Gln266. The ADP site is built by Thr287, Gly332, Gly433, and Asn437. ATP-binding residues include Thr287, Gly332, and Gly433. A Zn(2+)-binding site is contributed by Glu501. A helical transmembrane segment spans residues Ile532–Ala552.

It belongs to the FGGY kinase family.

Its subcellular location is the mitochondrion outer membrane. The protein localises to the nucleus. It is found in the cytoplasm. It localises to the cytosol. The catalysed reaction is glycerol + ATP = sn-glycerol 3-phosphate + ADP + H(+). It participates in polyol metabolism; glycerol degradation via glycerol kinase pathway; sn-glycerol 3-phosphate from glycerol: step 1/1. Functionally, kinase that plays a key role in glycerol metabolism, catalyzing its phosphorylation to produce sn-glycerol 3-phosphate. Sn-glycerol 3-phosphate is a crucial intermediate in various metabolic pathways, such as the synthesis of glycerolipids and triglycerides, glycogenesis, glycolysis and gluconeogenesis. This is Glycerol kinase from Rattus norvegicus (Rat).